The following is a 667-amino-acid chain: Protein OS-9 (667 aa).

The signal sequence occupies residues 1-25 (MAAETLLSSLLGLLLLGLLLPASLT). The MRH domain maps to 108 to 230 (APCLLKTKDW…TIRTPRLCPH (123 aa)). A disulfide bridge links Cys110 with Cys123. A mannooligosaccharide derivative contacts are provided by Trp117, Trp118, and Gln130. N-linked (GlcNAc...) asparagine glycosylation is present at Asn177. Intrachain disulfides connect Cys181–Cys216 and Cys196–Cys228. Asp182, Arg188, Glu212, and Tyr218 together coordinate a mannooligosaccharide derivative. Disordered stretches follow at residues 284-355 (WSET…NNVQ), 372-452 (LKGG…RDRL), 464-483 (LENIIQETEKELDPDGLKKE), 504-540 (LEEKQSPELVKKHKKKRVVPKKPPPSPQPTEEDPEHR), and 633-667 (AQKERQRQKELESNYRRVWGSPGGEGTGDLDEFDF). Composition is skewed to basic and acidic residues over residues 302 to 311 (TKDDSKDSDF) and 396 to 412 (PQREPEKERGDPERQRE). Over residues 413-429 (MEEEEDEDEDEDEDEDE) the composition is skewed to acidic residues. A compositionally biased stretch (basic and acidic residues) spans 430–452 (RQLLGEFEKELEGILLPSDRDRL). The span at 504 to 513 (LEEKQSPELV) shows a compositional bias: basic and acidic residues. Positions 514 to 523 (KKHKKKRVVP) are enriched in basic residues. Residues 633–647 (AQKERQRQKELESNY) are compositionally biased toward basic and acidic residues.

This sequence belongs to the OS-9 family. Component of the HRD1 complex, which comprises at least SYNV1/HRD1, DERL1/2, FAM8A1, HERPUD1/HERP, OS9, SEL1L and UBE2J1. FAM8A1 is stabilized by interaction with SYNV1, which prevents its proteasomal degradation. OS9 and UBE2J1 recruitment to the complex may be mediated by SEL1L. Through this complex, may interact with ERLEC1 and HSPA5. Interacts (via C-terminus) with CPNE6 (via second C2 domain); this interaction occurs in a calcium-dependent manner in vitro. Interacts with CREB3. Intramolecular disulfide bonds. In terms of processing, isoform 1 and isoform 2 are N-glycosylated. As to expression, ubiquitously expressed. Found as well in all tumor cell lines analyzed, amplified in sarcomas. Highly expressed in osteosarcoma SJSA-1 and rhabdomyosarcoma Rh30 cell lines. Isoform 2 is the major isoform detected in all cell types examined.

Its subcellular location is the endoplasmic reticulum lumen. Lectin component of the HRD1 complex, which functions in endoplasmic reticulum (ER) quality control and ER-associated degradation (ERAD). Specifically recognizes and binds improperly folded glycoproteins as well as hyperglycosylated proteins, retain them in the ER, and transfers them to the ubiquitination machinery and promote their degradation. Possible targets include TRPV4 as well as hyperglycosylated HSP90B1. In Homo sapiens (Human), this protein is Protein OS-9 (OS9).